The following is a 202-amino-acid chain: Josephin-1 (202 aa).

The disordered stretch occupies residues 1–22; that stretch reads MSCVPWKGDKAKAESSDLPQAA. Serine 15 is subject to Phosphoserine. In terms of domain architecture, Josephin spans 23–202; that stretch reads PPQIYHEKQR…EAHQSWRADV (180 aa). Cysteine 36 acts as the Nucleophile in catalysis. The active-site Proton acceptor is the histidine 139.

Interacts with beta-actin/ACTB. Post-translationally, monoubiquitinated. Ubiquitination activates deubiquitination activity in vitro. In terms of tissue distribution, widely expressed (at protein level).

The protein resides in the cell membrane. It localises to the cytoplasm. The catalysed reaction is Thiol-dependent hydrolysis of ester, thioester, amide, peptide and isopeptide bonds formed by the C-terminal Gly of ubiquitin (a 76-residue protein attached to proteins as an intracellular targeting signal).. Its function is as follows. Deubiquitinates monoubiquitinated probes (in vitro). When ubiquitinated, cleaves 'Lys-63'-linked and 'Lys-48'-linked poly-ubiquitin chains (in vitro), hence may act as a deubiquitinating enzyme. May increase macropinocytosis and suppress clathrin- and caveolae-mediated endocytosis. May enhance membrane dynamics and cell motility independently of its catalytic activity. The sequence is that of Josephin-1 (Josd1) from Mus musculus (Mouse).